The sequence spans 93 residues: Small ribosomal subunit protein uS19c (93 aa).

It belongs to the universal ribosomal protein uS19 family.

It is found in the plastid. Its subcellular location is the chloroplast. Its function is as follows. Protein S19 forms a complex with S13 that binds strongly to the 16S ribosomal RNA. This Lolium perenne (Perennial ryegrass) protein is Small ribosomal subunit protein uS19c.